Consider the following 152-residue polypeptide: UPF0225 protein YchJ (152 aa).

It belongs to the UPF0225 family.

The polypeptide is UPF0225 protein YchJ (Escherichia coli O81 (strain ED1a)).